The primary structure comprises 491 residues: MAIPKHSLSPVPWEEDSFLQVKVEEEEEASLSQGGESSHDHIAHSEAARLRFRHFRYEEASGPHEALAHLRALCCQWLQPEAHSKEQILELLVLEQFLGALPPEIQAWVGAQSPKSGEEAAVLVEDLTQVLDKRGWDPGAEPTEASCKQSDLGESEPSNVTETLMGGVSLGPAFVKACEPEGSSERSGLSGEIWTKSVTQQIHFKKTSGPYKDVPTDQRGRESGASRNSSSAWPNLTSQEKPPSEDKFDLVDAYGTEPPYTYSGKRSSKCRECRKMFQSASALEAHQKTHSRKTPYACSECGKAFSRSTHLAQHQVVHTGAKPHECKECGKAFSRVTHLTQHQRIHTGEKPYKCGECGKTFSRSTHLTQHQRVHTGERPYECDACGKAFSQSTHLTQHQRIHTGEKPYKCDACGRAFSDCSALIRHLRIHSGEKPYQCKVCPKAFAQSSSLIEHQRIHTGEKPYKCSDCGKAFSRSSALMVHLRIHITVLQ.

Phosphoserine is present on serine 9. The 83-residue stretch at 49 to 131 (RLRFRHFRYE…VLVEDLTQVL (83 aa)) folds into the SCAN box domain. 2 disordered regions span residues 134–161 (RGWD…SNVT) and 204–249 (FKKT…DKFD). The segment covering 214–224 (VPTDQRGRESG) has biased composition (basic and acidic residues). Residues 225-241 (ASRNSSSAWPNLTSQEK) are compositionally biased toward polar residues. C2H2-type zinc fingers lie at residues 268 to 290 (SKCR…QKTH), 296 to 318 (YACS…QVVH), 324 to 346 (HECK…QRIH), 352 to 374 (YKCG…QRVH), 380 to 402 (YECD…QRIH), 408 to 430 (YKCD…LRIH), 436 to 458 (YQCK…QRIH), and 464 to 486 (YKCS…LRIH). A Glycyl lysine isopeptide (Lys-Gly) (interchain with G-Cter in SUMO2) cross-link involves residue lysine 443.

It belongs to the krueppel C2H2-type zinc-finger protein family.

It localises to the nucleus. Its function is as follows. May be involved in transcriptional regulation. The polypeptide is Zinc finger and SCAN domain-containing protein 22 (ZSCAN22) (Homo sapiens (Human)).